The following is a 503-amino-acid chain: Probable Xaa-Pro aminopeptidase TSTA_094700 (503 aa).

The Mn(2+) site is built by D277, D288, E428, and E467.

The protein belongs to the peptidase M24B family. Mn(2+) is required as a cofactor.

It catalyses the reaction Release of any N-terminal amino acid, including proline, that is linked to proline, even from a dipeptide or tripeptide.. Catalyzes the removal of a penultimate prolyl residue from the N-termini of peptides. The sequence is that of Probable Xaa-Pro aminopeptidase TSTA_094700 from Talaromyces stipitatus (strain ATCC 10500 / CBS 375.48 / QM 6759 / NRRL 1006) (Penicillium stipitatum).